The following is a 404-amino-acid chain: uncharacterized protein (404 aa).

Positions 69, 75, 78, and 166 each coordinate [4Fe-4S] cluster. S-adenosyl-L-methionine is bound by residues glutamine 226, tyrosine 253, glutamate 274, and aspartate 334. Catalysis depends on cysteine 361, which acts as the Nucleophile.

This sequence belongs to the class I-like SAM-binding methyltransferase superfamily. RNA M5U methyltransferase family.

This is an uncharacterized protein from Treponema denticola (strain ATCC 35405 / DSM 14222 / CIP 103919 / JCM 8153 / KCTC 15104).